A 257-amino-acid chain; its full sequence is Pyrroline-5-carboxylate reductase (257 aa).

It belongs to the pyrroline-5-carboxylate reductase family.

Its subcellular location is the cytoplasm. It catalyses the reaction L-proline + NADP(+) = (S)-1-pyrroline-5-carboxylate + NADPH + 2 H(+). The enzyme catalyses L-proline + NAD(+) = (S)-1-pyrroline-5-carboxylate + NADH + 2 H(+). Its pathway is amino-acid biosynthesis; L-proline biosynthesis; L-proline from L-glutamate 5-semialdehyde: step 1/1. In terms of biological role, catalyzes the reduction of 1-pyrroline-5-carboxylate (PCA) to L-proline. The polypeptide is Pyrroline-5-carboxylate reductase (Helicobacter pylori (strain ATCC 700392 / 26695) (Campylobacter pylori)).